Here is a 161-residue protein sequence, read N- to C-terminus: Small ribosomal subunit protein uS9 (161 aa).

Over residues 1 to 21 (MATLQSLADLNRANTQTSNPE) the composition is skewed to polar residues. The segment at 1-25 (MATLQSLADLNRANTQTSNPENEAP) is disordered.

This sequence belongs to the universal ribosomal protein uS9 family.

In Methylorubrum extorquens (strain CM4 / NCIMB 13688) (Methylobacterium extorquens), this protein is Small ribosomal subunit protein uS9.